Reading from the N-terminus, the 419-residue chain is UPF0229 protein TERTU_3150 (419 aa).

Residues 63-111 (IFHHGSGGKNNRVLPGNDRFNGGDHIERPEQGQGGGGNGSGASDSGEGE) are disordered. The segment covering 83-92 (NGGDHIERPE) has biased composition (basic and acidic residues).

The protein belongs to the UPF0229 family.

This chain is UPF0229 protein TERTU_3150, found in Teredinibacter turnerae (strain ATCC 39867 / T7901).